Consider the following 124-residue polypeptide: MIQPQTRLKVADNTGAKEIMCIRVLGGSKRKFGNIGDVIVASVKSATPGGVVKKGEVVKAVIVRTKRGVRRADGSYIKFDENAAVVIKDDKQPRGTRIFGPIARELREKDKEFNKILSLAPEVL.

This sequence belongs to the universal ribosomal protein uL14 family. As to quaternary structure, part of the 50S ribosomal subunit. Forms a cluster with proteins L3 and L19. In the 70S ribosome, L14 and L19 interact and together make contacts with the 16S rRNA in bridges B5 and B8.

In terms of biological role, binds to 23S rRNA. Forms part of two intersubunit bridges in the 70S ribosome. This is Large ribosomal subunit protein uL14 from Clostridium novyi (strain NT).